The following is a 1057-amino-acid chain: Probable E3 ubiquitin-protein ligase HERC4 (1057 aa).

7 RCC1 repeats span residues 1 to 51 (MLCW…FVLD), 52 to 101 (DGTV…ALND), 102 to 154 (KGQV…ALSK), 156 to 207 (SEVF…VLTL), 208 to 259 (SGAI…ALTK), 261 to 311 (GGVF…AFVP), and 313 to 368 (SGRI…KRIF). The HECT domain maps to 730-1057 (KNIDYKKPLK…IDHNEGFSLI (328 aa)). Catalysis depends on Cys1025, which acts as the Glycyl thioester intermediate.

As to expression, expressed in brain and testis and detected in heart and placenta.

The protein resides in the cytoplasm. It localises to the cytosol. The enzyme catalyses S-ubiquitinyl-[E2 ubiquitin-conjugating enzyme]-L-cysteine + [acceptor protein]-L-lysine = [E2 ubiquitin-conjugating enzyme]-L-cysteine + N(6)-ubiquitinyl-[acceptor protein]-L-lysine.. Its pathway is protein modification; protein ubiquitination. Its function is as follows. Probable E3 ubiquitin-protein ligase involved in either protein trafficking or in the distribution of cellular structures. Required for spermatozoon maturation and fertility, and for the removal of the cytoplasmic droplet of the spermatozoon. E3 ubiquitin-protein ligases accept ubiquitin from an E2 ubiquitin-conjugating enzyme in the form of a thioester and then directly transfer it to targeted substrates. This is Probable E3 ubiquitin-protein ligase HERC4 (HERC4) from Homo sapiens (Human).